Here is a 313-residue protein sequence, read N- to C-terminus: Pre-mRNA-splicing factor 38A (313 aa).

Residues Met1–Pro179 are N-terminal protein interaction domain. Residues Glu172 to Asp201 adopt a coiled-coil conformation. The disordered stretch occupies residues Ser182 to Glu313. Acidic residues predominate over residues Leu184–Glu202. Basic and acidic residues predominate over residues Lys203–Arg224. Basic residues-rich tracts occupy residues Arg225–Ser250, His260–Ser294, and Lys302–Glu313.

Belongs to the PRP38 family. In terms of assembly, component of the spliceosome B complex.

It localises to the nucleus. Involved in pre-mRNA splicing as a component of the spliceosome. This chain is Pre-mRNA-splicing factor 38A (prpf38a), found in Danio rerio (Zebrafish).